A 514-amino-acid chain; its full sequence is Probable lysine--tRNA ligase, cytoplasmic (514 aa).

This sequence belongs to the class-II aminoacyl-tRNA synthetase family. In terms of assembly, homodimer.

The protein localises to the cytoplasm. It carries out the reaction tRNA(Lys) + L-lysine + ATP = L-lysyl-tRNA(Lys) + AMP + diphosphate. The protein is Probable lysine--tRNA ligase, cytoplasmic of Vairimorpha ceranae (strain BRL01) (Microsporidian parasite).